The following is a 305-amino-acid chain: MTNQYSILFKQEQAHDDAIWSVAWETNKKENIETVVTGSLDDLVKVWKWRDERLELQWSLEGHQLGVVSVDISHTLPIAASSSLDAHIRLWDLENGKQMKSIDAGPVDAWTLAFSPDSQYLATGTHMGKVNIFGVESGKKEYSLDTRGKFILSIAYSPDGKYLASGAIDGIINIFDIATGKLLHTLEGHAMPIRSLTFSPDSQLLVTASDDGYIKIYDVQHANLAGTLSGHASWVLNVAFCPDDTHFVSSSSDKSVKVWDVGTRTCIHTFFDHQDQVWGVKYNGNGSKIVSVGDDQEIHVYDCPI.

The residue at position 1 (M1) is an N-acetylmethionine. T2 is modified (N-acetylthreonine; in WD repeat-containing protein 61, N-terminally processed). WD repeat units follow at residues 14–57 (AHDD…LELQ), 62–101 (GHQL…QMKS), 104–143 (AGPV…KEYS), 146–187 (TRGK…HTLE), 188–227 (GHAM…LAGT), 230–269 (GHAS…CIHT), and 272–305 (DHQD…DCPI).

The protein belongs to the SKI8 family. Component of the PAF1 complex, which consists of CDC73, PAF1, LEO1, CTR9, RTF1 and SKIC8. The PAF1 complex interacts with PHF5A. Within the PAF1 complex interacts directly with PHF5A. Component of the SKI complex which consists of SKIC2, SKIC3 and SKIC8.

The protein resides in the nucleus. It localises to the cytoplasm. Component of the PAF1 complex (PAF1C) which has multiple functions during transcription by RNA polymerase II and is implicated in regulation of development and maintenance of embryonic stem cell pluripotency. PAF1C associates with RNA polymerase II through interaction with POLR2A CTD non-phosphorylated and 'Ser-2'- and 'Ser-5'-phosphorylated forms and is involved in transcriptional elongation, acting both independently and synergistically with TCEA1 and in cooperation with the DSIF complex and HTATSF1. PAF1C is required for transcription of Hox and Wnt target genes. PAF1C is involved in hematopoiesis and stimulates transcriptional activity of KMT2A/MLL1; it promotes leukemogenesis through association with KMT2A/MLL1-rearranged oncoproteins, such as KMT2A/MLL1-MLLT3/AF9 and KMT2A/MLL1-MLLT1/ENL. PAF1C is involved in histone modifications such as ubiquitination of histone H2B and methylation on histone H3 'Lys-4' (H3K4me3). PAF1C recruits the RNF20/40 E3 ubiquitin-protein ligase complex and the E2 enzyme UBE2A or UBE2B to chromatin which mediate monoubiquitination of 'Lys-120' of histone H2B (H2BK120ub1); UB2A/B-mediated H2B ubiquitination is proposed to be coupled to transcription. PAF1C is involved in mRNA 3' end formation probably through association with cleavage and poly(A) factors. In case of infection by influenza A strain H3N2, PAF1C associates with viral NS1 protein, thereby regulating gene transcription. Required for mono- and trimethylation on histone H3 'Lys-4' (H3K4me3), dimethylation on histone H3 'Lys-79' (H3K4me3). Required for Hox gene transcription. Also acts as a component of the SKI complex, a multiprotein complex that assists the RNA-degrading exosome during the mRNA decay and quality-control pathways. The SKI complex catalyzes mRNA extraction from 80S ribosomal complexes in the 3'-5' direction and channels mRNA to the cytosolic exosome for degradation. SKI-mediated extraction of mRNA from stalled ribosomes allow binding of the Pelota-HBS1L complex and subsequent ribosome disassembly by ABCE1 for ribosome recycling. This chain is Superkiller complex protein 8 (Skic8), found in Mus musculus (Mouse).